We begin with the raw amino-acid sequence, 265 residues long: Mlc titration factor A (265 aa).

Zn(2+) contacts are provided by His111, His148, His152, and Glu211.

This sequence belongs to the MtfA family. Interacts with Mlc. Zn(2+) serves as cofactor.

The protein resides in the cytoplasm. Involved in the modulation of the activity of the glucose-phosphotransferase system (glucose-PTS). Interacts with the transcriptional repressor Mlc, preventing its interaction with DNA and leading to the modulation of expression of genes regulated by Mlc, including ptsG, which encodes the PTS system glucose-specific EIICB component. Its function is as follows. Shows zinc-dependent metallopeptidase activity. In Escherichia coli (strain ATCC 8739 / DSM 1576 / NBRC 3972 / NCIMB 8545 / WDCM 00012 / Crooks), this protein is Mlc titration factor A.